We begin with the raw amino-acid sequence, 152 residues long: UPF0179 protein HQ_3004A (152 aa).

This sequence belongs to the UPF0179 family.

The sequence is that of UPF0179 protein HQ_3004A from Haloquadratum walsbyi (strain DSM 16790 / HBSQ001).